Consider the following 780-residue polypeptide: Acyl-CoA dehydrogenase family member 11 (780 aa).

Position 177 is an N6-acetyllysine (Lys-177). Tyr-324 is modified (phosphotyrosine). At Lys-391 the chain carries N6-succinyllysine. FAD-binding positions include 504–514 (FCMTEPDVASS) and 538–540 (WSS). Ser-514 lines the substrate pocket. 629–632 (GPGR) provides a ligand contact to substrate. Residues Arg-657, Gln-727, and 727–731 (QVCGG) each bind FAD. Position 755 (Gly-755) interacts with substrate. An FAD-binding site is contributed by 756–758 (PDE).

This sequence belongs to the acyl-CoA dehydrogenase family. As to quaternary structure, homodimer. FAD serves as cofactor. In terms of tissue distribution, widely expressed with highest levels in brain followed by liver, heart and kidney.

It is found in the peroxisome. Its subcellular location is the mitochondrion membrane. It catalyses the reaction a 2,3-saturated acyl-CoA + oxidized [electron-transfer flavoprotein] + H(+) = a (2E)-enoyl-CoA + reduced [electron-transfer flavoprotein]. The enzyme catalyses docosanoyl-CoA + oxidized [electron-transfer flavoprotein] + H(+) = (2E)-docosenoyl-CoA + reduced [electron-transfer flavoprotein]. The catalysed reaction is tetracosanoyl-CoA + oxidized [electron-transfer flavoprotein] + H(+) = (2E)-tetracosenoyl-CoA + reduced [electron-transfer flavoprotein]. It carries out the reaction eicosanoyl-CoA + oxidized [electron-transfer flavoprotein] + H(+) = (2E)-eicosenoyl-CoA + reduced [electron-transfer flavoprotein]. It catalyses the reaction hexacosanoyl-CoA + oxidized [electron-transfer flavoprotein] + H(+) = (2E)-hexacosenoyl-CoA + reduced [electron-transfer flavoprotein]. The enzyme catalyses tricosanoyl-CoA + oxidized [electron-transfer flavoprotein] + H(+) = (2E)-tricosenoyl-CoA + reduced [electron-transfer flavoprotein]. The protein operates within lipid metabolism; fatty acid beta-oxidation. In terms of biological role, acyl-CoA dehydrogenase, that exhibits maximal activity towards saturated C22-CoA. Probably participates in beta-oxydation and energy production but could also play a role in the metabolism of specific fatty acids to control fatty acids composition of cellular lipids in brain. This is Acyl-CoA dehydrogenase family member 11 (ACAD11) from Homo sapiens (Human).